A 463-amino-acid chain; its full sequence is Major capsid protein (463 aa).

It belongs to the NCLDV major capsid protein family. As to quaternary structure, homotrimer.

It is found in the virion. In terms of biological role, major capsid protein that self assembles to form an icosahedral capsid. Represents around 50% of the total virion protein mass. This is Major capsid protein (MCP) from Rana tigrina ranavirus.